The primary structure comprises 194 residues: Archaetidylinositol phosphate synthase (194 aa).

2 consecutive transmembrane segments (helical) span residues 32–51 (IYTLASPVAAAAALPAWLYI) and 58–78 (LLIALSLLLDAVDGAVARFTG). 4 residues coordinate Mg(2+): Asp67, Asp70, Asp88, and Asp92. Asp92 functions as the Proton acceptor in the catalytic mechanism. 3 helical membrane passes run 103–123 (LYIAGVHPLIVIAMLSGGLIV), 150–170 (IAILAILAISIYNLQTALALA), and 172–192 (AAAVLVWITVIQRMVYIAGEL).

Belongs to the CDP-alcohol phosphatidyltransferase class-I family. The cofactor is Mn(2+). Mg(2+) is required as a cofactor.

It localises to the cell membrane. The enzyme catalyses CDP-2,3-bis-O-(phytanyl)-sn-glycerol + 1D-myo-inositol 3-phosphate = saturated 1-archaetidyl-1D-myo-inositol 3-phosphate + CMP + H(+). Its pathway is lipid metabolism; phospholipid metabolism. Functionally, catalyzes the formation of archaetidylinositol phosphate (AIP) from CDP-archaeol (CDP-ArOH or CDP-2,3-bis-(O-phytanyl)-sn-glycerol) and 1L-myo-inositol 1-phosphate (IP or 1D-myo-inositol 3-phosphate). AIP is a precursor of archaetidyl-myo-inositol (AI), an ether-type inositol phospholipid ubiquitously distributed in archaea membranes and essential for glycolipid biosynthesis in archaea. The protein is Archaetidylinositol phosphate synthase of Aeropyrum pernix (strain ATCC 700893 / DSM 11879 / JCM 9820 / NBRC 100138 / K1).